Consider the following 341-residue polypeptide: Processive diacylglycerol beta-glycosyltransferase (341 aa).

The protein belongs to the glycosyltransferase 2 family. It depends on Mg(2+) as a cofactor.

Its subcellular location is the cell membrane. The catalysed reaction is a 1,2-diacyl-sn-glycerol + UDP-alpha-D-glucose = a 1,2-diacyl-3-O-(beta-D-glucopyranosyl)-sn-glycerol + UDP + H(+). It carries out the reaction a 1,2-diacyl-sn-glycerol + UDP-alpha-D-galactose = a 1,2-diacyl-3-O-(beta-D-galactosyl)-sn-glycerol + UDP + H(+). It catalyses the reaction a 1,2-diacyl-3-O-(beta-D-galactosyl)-sn-glycerol + UDP-alpha-D-glucose = a 1,2-diacyl-3-O-[beta-D-glucopyranosyl-(1-&gt;6)-beta-D-galactopyranosyl]-sn-glycerol + UDP + H(+). The enzyme catalyses a 1,2-diacyl-3-O-(beta-D-galactosyl)-sn-glycerol + UDP-alpha-D-galactose = a 1,2-diacyl-3-O-[beta-D-galactosyl-(1-&gt;6)-beta-D-galactosyl]-sn-glycerol + UDP + H(+). With respect to regulation, activated by the negatively charged lipid phosphatidylglycerol (PG). Processive glycosyltransferase involved in the biosynthesis of both the non-bilayer-prone beta-monoglycosyldiacylglycerol and the bilayer-forming membrane lipid glucosyl-galactosyldiacylglycerol and digalactosyl-diacylglycerol. These components contribute to regulate the properties and stability of the membrane. Catalyzes sequentially the transfers of glucosyl or galactosyl residues from UDP-Glc or UDP-Gal to diacylglycerol (DAG) acceptor to form the corresponding beta-glycosyl-DAG (3-O-(beta-D-glycopyranosyl)-1,2-diacyl-sn-glycerol). Then, only beta-galactosyl-DAG (3-O-(beta-D-galactopyranosyl)-1,2-diacyl-sn-glycerol) can act as acceptor to give the beta-glycosyl-beta-galactosyl-DAG product (3-O-(beta-D-glycopyranosyl-(1-&gt;6)-D-galactopyranosyl)-1,2-diacyl-sn-glycerol). It can also use alpha-Gal-beta-Gal-DAG, ceramide (Cer) and beta-Gal-Cer as sugar acceptors. The enzyme is supposed to be mainly a galactosyltransferase, with higher glycosyltransferase activity for the addition of the second glycosyl on beta-Gal-DAG as acceptor. The main glycolipid produced in vivo is beta-Glc-beta-Gal-DAG with a beta-1,6 linkage. In Mycoplasma pneumoniae (strain ATCC 29342 / M129 / Subtype 1) (Mycoplasmoides pneumoniae), this protein is Processive diacylglycerol beta-glycosyltransferase.